We begin with the raw amino-acid sequence, 81 residues long: EC protein I/II (81 aa).

This sequence belongs to the metallothionein superfamily. Type 15 family.

Functionally, binds 5 molecules of zinc. May have a role in Zn(2+) homeostasis during embryogenesis. The sequence is that of EC protein I/II from Triticum aestivum (Wheat).